The chain runs to 165 residues: Disulfide bond formation protein B (165 aa).

Residues 1–16 are Cytoplasmic-facing; the sequence is MTILNSLNQFSKGRLS. Residues 17–33 form a helical membrane-spanning segment; it reads WLLLLLFVVFFEACALY. Residues 34–51 are Periplasmic-facing; the sequence is FQHVMMLAPCVMCIYERV. C43 and C46 are disulfide-bonded. Residues 52-67 traverse the membrane as a helical segment; the sequence is AMMGVGVAAIVGLMAP. Residues 68-74 are Cytoplasmic-facing; sequence NNPIFRW. The chain crosses the membrane as a helical span at residues 75 to 92; that stretch reads LGLIGWGLSSYKGLLLAQ. Over 93-147 the chain is Periplasmic; it reads QHVDYQFNPSPFATCDLFVTFPSWRPLNQWAPWIFEAYGDCSKIVWQFLDLSMPQ. C107 and C133 are oxidised to a cystine. Residues 148–165 traverse the membrane as a helical segment; that stretch reads WLVVIFAGNLIALALIVI.

It belongs to the DsbB family.

It localises to the cell inner membrane. Required for disulfide bond formation in some periplasmic proteins. Acts by oxidizing the DsbA protein. This chain is Disulfide bond formation protein B, found in Vibrio alginolyticus.